The primary structure comprises 256 residues: Protein FixA (256 aa).

The protein belongs to the ETF beta-subunit/FixA family. In terms of assembly, heterodimer of FixA and FixB.

It functions in the pathway amine and polyamine metabolism; carnitine metabolism. In terms of biological role, required for anaerobic carnitine reduction. May bring reductant to CaiA. The sequence is that of Protein FixA from Salmonella paratyphi A (strain ATCC 9150 / SARB42).